The sequence spans 167 residues: Lipoprotein signal peptidase (167 aa).

2 helical membrane passes run 56-76 and 84-104; these read FAPPFVLLMLTGAIVLGVLVF and TPIFLSAFGLIAGGGIGNMID. Active-site residues include Asp113 and Asp139. Residues 132-152 form a helical membrane-spanning segment; the sequence is WPIFNVADSAITIGACMLVLF.

Belongs to the peptidase A8 family.

It is found in the cell inner membrane. The catalysed reaction is Release of signal peptides from bacterial membrane prolipoproteins. Hydrolyzes -Xaa-Yaa-Zaa-|-(S,diacylglyceryl)Cys-, in which Xaa is hydrophobic (preferably Leu), and Yaa (Ala or Ser) and Zaa (Gly or Ala) have small, neutral side chains.. It participates in protein modification; lipoprotein biosynthesis (signal peptide cleavage). This protein specifically catalyzes the removal of signal peptides from prolipoproteins. The polypeptide is Lipoprotein signal peptidase (Chlorobium luteolum (strain DSM 273 / BCRC 81028 / 2530) (Pelodictyon luteolum)).